Consider the following 248-residue polypeptide: 1-(5-phosphoribosyl)-5-[(5-phosphoribosylamino)methylideneamino] imidazole-4-carboxamide isomerase (248 aa).

Asp17 acts as the Proton acceptor in catalysis. Residue Asp136 is the Proton donor of the active site.

This sequence belongs to the HisA/HisF family.

The protein resides in the cytoplasm. The catalysed reaction is 1-(5-phospho-beta-D-ribosyl)-5-[(5-phospho-beta-D-ribosylamino)methylideneamino]imidazole-4-carboxamide = 5-[(5-phospho-1-deoxy-D-ribulos-1-ylimino)methylamino]-1-(5-phospho-beta-D-ribosyl)imidazole-4-carboxamide. It participates in amino-acid biosynthesis; L-histidine biosynthesis; L-histidine from 5-phospho-alpha-D-ribose 1-diphosphate: step 4/9. This Arthrobacter sp. (strain FB24) protein is 1-(5-phosphoribosyl)-5-[(5-phosphoribosylamino)methylideneamino] imidazole-4-carboxamide isomerase.